The primary structure comprises 371 residues: F-box protein At2g41170 (371 aa).

One can recognise an F-box domain in the interval 56–102 (KMSLLDLPDLTLDCILEKLSPSELCAMTSVCSELRDKCVSDHLWEKH).

This Arabidopsis thaliana (Mouse-ear cress) protein is F-box protein At2g41170.